Consider the following 167-residue polypeptide: Leptin (167 aa).

The N-terminal stretch at 1–21 (MCWRPLCRFLWLWSYLSYVQA) is a signal peptide. A disulfide bridge links C117 with C167.

The protein belongs to the leptin family.

Its subcellular location is the secreted. Its function is as follows. Key player in the regulation of energy balance and body weight control. Once released into the circulation, has central and peripheral effects by binding LEPR, found in many tissues, which results in the activation of several major signaling pathways. In the hypothalamus, acts as an appetite-regulating factor that induces a decrease in food intake and an increase in energy consumption by inducing anorexinogenic factors and suppressing orexigenic neuropeptides, also regulates bone mass and secretion of hypothalamo-pituitary-adrenal hormones. In the periphery, increases basal metabolism, influences reproductive function, regulates pancreatic beta-cell function and insulin secretion, is pro-angiogenic for endothelial cell and affects innate and adaptive immunity. In the arcuate nucleus of the hypothalamus, activates by depolarization POMC neurons inducing FOS and SOCS3 expression to release anorexigenic peptides and inhibits by hyperpolarization NPY neurons inducing SOCS3 with a consequent reduction on release of orexigenic peptides. In addition to its known satiety inducing effect, has a modulatory role in nutrient absorption. In the intestine, reduces glucose absorption by enterocytes by activating PKC and leading to a sequential activation of p38, PI3K and ERK signaling pathways which exerts an inhibitory effect on glucose absorption. Acts as a growth factor on certain tissues, through the activation of different signaling pathways increases expression of genes involved in cell cycle regulation such as CCND1, via JAK2-STAT3 pathway, or VEGFA, via MAPK1/3 and PI3K-AKT1 pathways. May also play an apoptotic role via JAK2-STAT3 pathway and up-regulation of BIRC5 expression. Pro-angiogenic, has mitogenic activity on vascular endothelial cells and plays a role in matrix remodeling by regulating the expression of matrix metalloproteinases (MMPs) and tissue inhibitors of metalloproteinases (TIMPs). In innate immunity, modulates the activity and function of neutrophils by increasing chemotaxis and the secretion of oxygen radicals. Increases phagocytosis by macrophages and enhances secretion of pro-inflammatory mediators. Increases cytotoxic ability of NK cells. Plays a pro-inflammatory role, in synergy with IL1B, by inducing NOS2 which promotes the production of IL6, IL8 and Prostaglandin E2, through a signaling pathway that involves JAK2, PI3K, MAP2K1/MEK1 and MAPK14/p38. In adaptive immunity, promotes the switch of memory T-cells towards T helper-1 cell immune responses. Increases CD4(+)CD25(-) T cells proliferation and reduces autophagy during TCR (T cell receptor) stimulation, through MTOR signaling pathway activation and BCL2 up-regulation. The chain is Leptin (Lep) from Mus musculus (Mouse).